Here is a 434-residue protein sequence, read N- to C-terminus: Chaperone SurA (434 aa).

The N-terminal stretch at 1–22 (MKPSKHLIFALFALAISQPTMA) is a signal peptide. PpiC domains are found at residues 173 to 274 (DVEY…KIMD) and 283 to 383 (IEEV…QLEE).

The protein localises to the periplasm. It carries out the reaction [protein]-peptidylproline (omega=180) = [protein]-peptidylproline (omega=0). In terms of biological role, chaperone involved in the correct folding and assembly of outer membrane proteins. Recognizes specific patterns of aromatic residues and the orientation of their side chains, which are found more frequently in integral outer membrane proteins. May act in both early periplasmic and late outer membrane-associated steps of protein maturation. This chain is Chaperone SurA, found in Shewanella sp. (strain MR-4).